The primary structure comprises 253 residues: Demethylmenaquinone methyltransferase (253 aa).

S-adenosyl-L-methionine-binding positions include Thr-62, Asp-80, 102–103 (DA), and Ser-119.

The protein belongs to the class I-like SAM-binding methyltransferase superfamily. MenG/UbiE family.

The enzyme catalyses a 2-demethylmenaquinol + S-adenosyl-L-methionine = a menaquinol + S-adenosyl-L-homocysteine + H(+). Its pathway is quinol/quinone metabolism; menaquinone biosynthesis; menaquinol from 1,4-dihydroxy-2-naphthoate: step 2/2. Functionally, methyltransferase required for the conversion of demethylmenaquinol (DMKH2) to menaquinol (MKH2). This Paenarthrobacter aurescens (strain TC1) protein is Demethylmenaquinone methyltransferase.